We begin with the raw amino-acid sequence, 155 residues long: Small ribosomal subunit protein uS7c (155 aa).

It belongs to the universal ribosomal protein uS7 family. Part of the 30S ribosomal subunit.

The protein localises to the plastid. One of the primary rRNA binding proteins, it binds directly to 16S rRNA where it nucleates assembly of the head domain of the 30S subunit. This chain is Small ribosomal subunit protein uS7c (rps7), found in Lathraea clandestina (Purple toothwort).